We begin with the raw amino-acid sequence, 156 residues long: Cyanate hydratase (156 aa).

Active-site residues include Arg96, Glu99, and Ser122.

Belongs to the cyanase family.

The catalysed reaction is cyanate + hydrogencarbonate + 3 H(+) = NH4(+) + 2 CO2. Its function is as follows. Catalyzes the reaction of cyanate with bicarbonate to produce ammonia and carbon dioxide. This chain is Cyanate hydratase, found in Serratia proteamaculans (strain 568).